A 445-amino-acid chain; its full sequence is Interferon-activable protein 202 (445 aa).

Residues 1–27 (MSNRNLRSSTNSEFSEGQHQTPSSDSS) are compositionally biased toward polar residues. A disordered region spans residues 1–57 (MSNRNLRSSTNSEFSEGQHQTPSSDSSGHGEDQPQASPGPNKKSHTPKKNISKGAVL). A compositionally biased stretch (basic residues) spans 42–51 (KKSHTPKKNI). 2 consecutive HIN-200 domains span residues 46–243 (TPKK…IKGE) and 244–441 (KLLK…MEVI). Required for homomultimerization stretches follow at residues 82–89 (MFHATVAT) and 281–288 (MFHATVAT).

Belongs to the HIN-200 family. As to quaternary structure, homomultimer; homotetramerizes (via HIN-200 domain 2), enhancing affinity for double-stranded DNA (dsDNA). Interacts (via HIN-200 domain 2) with AIM2 (via HIN-200 domain); preventing activation of the AIM2 inflammasome. Binds to several transcription factors, including NF-kappa-B p50 (NFKB1) and p65 (RELA), FOS, JUN, E2F1, E2F4, MYOD1 and myogenin. Also binds TP53/p53, the hypophosphorylated, growth-inhibitory form of the retinoblastoma protein and the p53-binding protein 1 (TP53BP1). In terms of processing, phosphorylated.

The protein localises to the cytoplasm. Its subcellular location is the nucleus. DNA-binding protein involved in innate immune response and has anti-inflammatory activity. Inhibits caspase activation in response to cytosolic DNA by preventing activation of the AIM2 inflammasome, probably by sequestering cytoplasmic DNA and preventing its being bound by AIM2. Also inhibits activation of the AIM2 inflammasome via a direct interaction with AIM2, which prevents the interaction between AIM2 and PYCARD and formation of the AIM2 inflammasome. Binds double-stranded DNA (dsDNA) in the cytosol. Has anti-apoptotic effects due to inhibition of the transcriptional activity of TP53/p53. Inhibits the transcriptional activity of several transcription factors, including NF-kappa-B p50 and p65, FOS, JUN, E2F1, E2F4, MYOD1 and myogenin. The protein is Interferon-activable protein 202 of Mus musculus (Mouse).